The sequence spans 1043 residues: Unconventional myosin-Ia (1043 aa).

The Myosin motor domain occupies 8–694; sequence VGVEDLVLLE…TLFYLEEQRR (687 aa). Position 101–108 (101–108) interacts with ATP; sequence GESGSGKT. The tract at residues 571-593 is actin-binding; that stretch reads VAILMKNLYSKSPNYIRCIKPNE. IQ domains lie at 697-719, 720-742, and 743-772; these read LQQL…HYQL, MRKS…CYGK, and IKAS…SEAA. Residues 858-1042 form the TH1 domain; it reads KASYPQSVPI…KGSHCLEVTV (185 aa).

Belongs to the TRAFAC class myosin-kinesin ATPase superfamily. Myosin family. Post-translationally, phosphorylated by ALPK1.

In terms of biological role, involved in directing the movement of organelles along actin filaments. This chain is Unconventional myosin-Ia (MYO1A), found in Homo sapiens (Human).